Consider the following 376-residue polypeptide: Queuine tRNA-ribosyltransferase (376 aa).

Asp93 (proton acceptor) is an active-site residue. Substrate-binding positions include 93–97 (DSGGF), Asp147, Gln190, and Gly217. An RNA binding region spans residues 248–254 (GVGKPDD). Asp267 serves as the catalytic Nucleophile. Positions 305, 307, 310, and 336 each coordinate Zn(2+).

It belongs to the queuine tRNA-ribosyltransferase family. As to quaternary structure, homodimer. Within each dimer, one monomer is responsible for RNA recognition and catalysis, while the other monomer binds to the replacement base PreQ1. The cofactor is Zn(2+).

It carries out the reaction 7-aminomethyl-7-carbaguanine + guanosine(34) in tRNA = 7-aminomethyl-7-carbaguanosine(34) in tRNA + guanine. It participates in tRNA modification; tRNA-queuosine biosynthesis. Its function is as follows. Catalyzes the base-exchange of a guanine (G) residue with the queuine precursor 7-aminomethyl-7-deazaguanine (PreQ1) at position 34 (anticodon wobble position) in tRNAs with GU(N) anticodons (tRNA-Asp, -Asn, -His and -Tyr). Catalysis occurs through a double-displacement mechanism. The nucleophile active site attacks the C1' of nucleotide 34 to detach the guanine base from the RNA, forming a covalent enzyme-RNA intermediate. The proton acceptor active site deprotonates the incoming PreQ1, allowing a nucleophilic attack on the C1' of the ribose to form the product. After dissociation, two additional enzymatic reactions on the tRNA convert PreQ1 to queuine (Q), resulting in the hypermodified nucleoside queuosine (7-(((4,5-cis-dihydroxy-2-cyclopenten-1-yl)amino)methyl)-7-deazaguanosine). The sequence is that of Queuine tRNA-ribosyltransferase from Cereibacter sphaeroides (strain ATCC 17029 / ATH 2.4.9) (Rhodobacter sphaeroides).